We begin with the raw amino-acid sequence, 386 residues long: Aspergillopepsin-1 (386 aa).

The signal sequence occupies residues 1 to 20 (MVVFSKVAAAAFGLSAVASA). Residues 21-69 (MPAAPPRQGFTINQLTRAIPKRTINLPAIYANALSKYGGNVPPHIQDAM) constitute a propeptide, activation peptide. One can recognise a Peptidase A1 domain in the interval 85 to 383 (YLTPVAVGGT…DSEGPQLGFA (299 aa)). The active site involves Asp-101. An N-linked (GlcNAc...) asparagine glycan is attached at Asn-130. Asp-275 is an active-site residue. Cysteines 311 and 346 form a disulfide.

It belongs to the peptidase A1 family. Monomer.

Its subcellular location is the secreted. The enzyme catalyses Hydrolysis of proteins with broad specificity. Generally favors hydrophobic residues in P1 and P1', but also accepts Lys in P1, which leads to activation of trypsinogen. Does not clot milk.. Secreted aspartic endopeptidase that allows assimilation of proteinaceous substrates. The scissile peptide bond is attacked by a nucleophilic water molecule activated by two aspartic residues in the active site. Shows a broad primary substrate specificity. Favors hydrophobic residues at the P1 and P1' positions, but also accepts a lysine residue in the P1 position, leading to the activation of trypsinogen and chymotrypsinogen A. The sequence is that of Aspergillopepsin-1 from Emericella nidulans (strain FGSC A4 / ATCC 38163 / CBS 112.46 / NRRL 194 / M139) (Aspergillus nidulans).